A 1547-amino-acid polypeptide reads, in one-letter code: Mediator of RNA polymerase II transcription subunit 12 (1547 aa).

2 disordered regions span residues 1-63 and 1356-1509; these read MTSR…RPHI and PVIP…QQRD. A compositionally biased stretch (pro residues) spans 1357 to 1369; the sequence is VIPPLEPPQPPNP. Polar residues predominate over residues 1379–1390; that stretch reads YQSPQMTSNTAA. Low complexity-rich tracts occupy residues 1398–1413 and 1446–1468; these read QQQQQSQTLQPSQQTQ and LSPLQQMQHMQQLQGLAQQRASQ. Polar residues-rich tracts occupy residues 1469–1480 and 1499–1509; these read PSPIHSQRPTSV and AHTSYVNQQRD.

Belongs to the Mediator complex subunit 12 family. Component of the SRB8-11 complex, which itself associates with the Mediator complex.

It is found in the nucleus. Functionally, component of the SRB8-11 complex. The SRB8-11 complex is a regulatory module of the Mediator complex which is itself involved in regulation of basal and activated RNA polymerase II-dependent transcription. The SRB8-11 complex may be involved in the transcriptional repression of a subset of genes regulated by Mediator. It may inhibit the association of the Mediator complex with RNA polymerase II to form the holoenzyme complex. The protein is Mediator of RNA polymerase II transcription subunit 12 (SRB8) of Phaeosphaeria nodorum (strain SN15 / ATCC MYA-4574 / FGSC 10173) (Glume blotch fungus).